Here is a 66-residue protein sequence, read N- to C-terminus: Large ribosomal subunit protein uL29 (66 aa).

This sequence belongs to the universal ribosomal protein uL29 family.

The polypeptide is Large ribosomal subunit protein uL29 (Fervidobacterium nodosum (strain ATCC 35602 / DSM 5306 / Rt17-B1)).